The chain runs to 524 residues: Na(+)/H(+) antiporter NhaB (524 aa).

13 helical membrane-spanning segments follow: residues 23-43 (LAII…SPFV), 45-65 (GWML…CYPL), 98-118 (LLLI…LFIF), 136-156 (CVAS…AVVI), 203-223 (LMMH…VGEP), 239-259 (FFMR…LVCI), 304-324 (ALIG…VGLV), 325-345 (GLSV…HALG), 358-378 (LTVF…TPII), 392-412 (LFYL…VGTV), 420-440 (AFEL…AINT), 448-468 (ATPN…APLI), and 479-499 (ALPY…YLLV).

Belongs to the NhaB Na(+)/H(+) (TC 2.A.34) antiporter family.

Its subcellular location is the cell inner membrane. The catalysed reaction is 2 Na(+)(in) + 3 H(+)(out) = 2 Na(+)(out) + 3 H(+)(in). Na(+)/H(+) antiporter that extrudes sodium in exchange for external protons. In Yersinia enterocolitica serotype O:8 / biotype 1B (strain NCTC 13174 / 8081), this protein is Na(+)/H(+) antiporter NhaB.